The chain runs to 512 residues: Bifunctional purine biosynthesis protein PurH (512 aa).

The MGS-like domain maps to 1-146; the sequence is MTIKRALISV…KNHQDVTVIV (146 aa).

The protein belongs to the PurH family.

The catalysed reaction is (6R)-10-formyltetrahydrofolate + 5-amino-1-(5-phospho-beta-D-ribosyl)imidazole-4-carboxamide = 5-formamido-1-(5-phospho-D-ribosyl)imidazole-4-carboxamide + (6S)-5,6,7,8-tetrahydrofolate. The enzyme catalyses IMP + H2O = 5-formamido-1-(5-phospho-D-ribosyl)imidazole-4-carboxamide. Its pathway is purine metabolism; IMP biosynthesis via de novo pathway; 5-formamido-1-(5-phospho-D-ribosyl)imidazole-4-carboxamide from 5-amino-1-(5-phospho-D-ribosyl)imidazole-4-carboxamide (10-formyl THF route): step 1/1. It participates in purine metabolism; IMP biosynthesis via de novo pathway; IMP from 5-formamido-1-(5-phospho-D-ribosyl)imidazole-4-carboxamide: step 1/1. This is Bifunctional purine biosynthesis protein PurH from Bacillus subtilis (strain 168).